Here is a 79-residue protein sequence, read N- to C-terminus: Acyl carrier protein (79 aa).

The 76-residue stretch at 2 to 77 (SDIEARVKKI…LAIDYAKSHA (76 aa)) folds into the Carrier domain. Residue S37 is modified to O-(pantetheine 4'-phosphoryl)serine.

Belongs to the acyl carrier protein (ACP) family. Post-translationally, 4'-phosphopantetheine is transferred from CoA to a specific serine of apo-ACP by AcpS. This modification is essential for activity because fatty acids are bound in thioester linkage to the sulfhydryl of the prosthetic group.

It is found in the cytoplasm. It participates in lipid metabolism; fatty acid biosynthesis. Its function is as follows. Carrier of the growing fatty acid chain in fatty acid biosynthesis. The sequence is that of Acyl carrier protein from Methylibium petroleiphilum (strain ATCC BAA-1232 / LMG 22953 / PM1).